Here is a 373-residue protein sequence, read N- to C-terminus: Transcription factor NF-E2 45 kDa subunit (373 aa).

2 disordered regions span residues Met-1–Gly-22 and Leu-40–Leu-60. The segment at Met-1–Tyr-83 is required for interaction with MAPK8. Residues Met-1–Glu-206 are transactivation domain. 2 consecutive short sequence motifs (PXY motif) follow at residues Pro-61–Tyr-65 and Pro-79–Tyr-83. The disordered stretch occupies residues Leu-131 to Thr-163. The residue at position 157 (Ser-157) is a Phosphoserine; by MAPK8. Residue Ser-170 is modified to Phosphoserine; by PKA. Positions Glu-206 to Arg-225 are disordered. The bZIP domain occupies Leu-266 to Leu-329. The basic motif stretch occupies residues Arg-268–Lys-287. The leucine-zipper stretch occupies residues Ile-291 to Leu-298. Residue Lys-368 forms a Glycyl lysine isopeptide (Lys-Gly) (interchain with G-Cter in SUMO); alternate linkage. Lys-368 is covalently cross-linked (Glycyl lysine isopeptide (Lys-Gly) (interchain with G-Cter in SUMO1); alternate).

The protein belongs to the bZIP family. CNC subfamily. In terms of assembly, homodimer; can bind DNA as a homodimer. Erythroid transcription activator nuclear factor erythroid-derived 2 (NF-E2), composed of a heterodimer of NFE2 and MAFK, possesses transactivation activity on beta-globin. Also forms high affinity heterodimer with MAFG; the interaction promotes erythropoiesis. Interacts (via the PXY motif 1) with ITCH (via the WW 1 domain); the interaction promotes 'Lys63'-linked ubiquitination of NFE2, translocates it to the cytoplasm and inhibits its transactivation activity. Interacts with KMT2D/MLL2; the interaction promotes transactivation of the beta-globin locus. Interacts with MAPK8 (phosphorylated form); the interaction leads to phosphorylation of NFE2 in undifferentiated cells. In terms of processing, phosphorylated on serine residues. In undifferentiated erythrocytes, phosphorylated by MAPK8 which then leads to ubiquitination and protein degradation. Sumoylated. Sumoylation is required for translocation to nuclear bodies PODs, anchoring to the gene loci, and transactivation of the beta-globin gene. Post-translationally, ubiquitinated mainly by 'Lys63'-linked ubiquitin. Polyubiquitination with 'Lys63'-linked ubiquitin by ITCH retains NFE2 in the cytoplasm preventing its transactivation activity. In undifferentiated erythrocyte, ubiquitinated after MAPK8-mediatd phosphorylation leading to protein degradation.

The protein resides in the nucleus. Its subcellular location is the PML body. It localises to the cytoplasm. Its function is as follows. Component of the NF-E2 complex essential for regulating erythroid and megakaryocytic maturation and differentiation. Binds to the hypersensitive site 2 (HS2) of the beta-globin control region (LCR). This subunit (NFE2) recognizes the TCAT/C sequence of the AP-1-like core palindrome present in a number of erythroid and megakaryocytic gene promoters. Requires MAFK or other small MAF proteins for binding to the NF-E2 motif. May play a role in all aspects of hemoglobin production from globin and heme synthesis to procurement of iron. This is Transcription factor NF-E2 45 kDa subunit (Nfe2) from Rattus norvegicus (Rat).